We begin with the raw amino-acid sequence, 475 residues long: 3-isopropylmalate dehydratase large subunit (475 aa).

[4Fe-4S] cluster-binding residues include Cys-353, Cys-414, and Cys-417.

It belongs to the aconitase/IPM isomerase family. LeuC type 1 subfamily. In terms of assembly, heterodimer of LeuC and LeuD. It depends on [4Fe-4S] cluster as a cofactor.

It carries out the reaction (2R,3S)-3-isopropylmalate = (2S)-2-isopropylmalate. The protein operates within amino-acid biosynthesis; L-leucine biosynthesis; L-leucine from 3-methyl-2-oxobutanoate: step 2/4. Functionally, catalyzes the isomerization between 2-isopropylmalate and 3-isopropylmalate, via the formation of 2-isopropylmaleate. The sequence is that of 3-isopropylmalate dehydratase large subunit from Marinomonas sp. (strain MWYL1).